The primary structure comprises 367 residues: tRNA/tmRNA (uracil-C(5))-methyltransferase (367 aa).

S-adenosyl-L-methionine-binding residues include glutamine 191, tyrosine 218, asparagine 223, glutamate 239, and aspartate 299. The active-site Nucleophile is the cysteine 324. Glutamate 358 serves as the catalytic Proton acceptor.

It belongs to the class I-like SAM-binding methyltransferase superfamily. RNA M5U methyltransferase family. TrmA subfamily.

It catalyses the reaction uridine(54) in tRNA + S-adenosyl-L-methionine = 5-methyluridine(54) in tRNA + S-adenosyl-L-homocysteine + H(+). The catalysed reaction is uridine(341) in tmRNA + S-adenosyl-L-methionine = 5-methyluridine(341) in tmRNA + S-adenosyl-L-homocysteine + H(+). Functionally, dual-specificity methyltransferase that catalyzes the formation of 5-methyluridine at position 54 (m5U54) in all tRNAs, and that of position 341 (m5U341) in tmRNA (transfer-mRNA). This Campylobacter concisus (strain 13826) protein is tRNA/tmRNA (uracil-C(5))-methyltransferase.